A 208-amino-acid chain; its full sequence is Large ribosomal subunit protein uL3 (208 aa).

At Q149 the chain carries N5-methylglutamine.

The protein belongs to the universal ribosomal protein uL3 family. As to quaternary structure, part of the 50S ribosomal subunit. Forms a cluster with proteins L14 and L19. In terms of processing, methylated by PrmB.

Its function is as follows. One of the primary rRNA binding proteins, it binds directly near the 3'-end of the 23S rRNA, where it nucleates assembly of the 50S subunit. In Haemophilus influenzae (strain 86-028NP), this protein is Large ribosomal subunit protein uL3.